The following is an 839-amino-acid chain: Sodium/hydrogen exchanger 3 (839 aa).

The first 32 residues, 1 to 32 (MPLGVRGTRREFRFPVWGLLLLALWMLPRALG), serve as a signal peptide directing secretion. Topologically, residues 33 to 56 (VEEIPGPDSHEKQGFQIVTFKWHH) are extracellular. The helical transmembrane segment at 57–79 (VQDPYIIALWILVASLAKIVFHL) threads the bilayer. Topologically, residues 80-87 (SHKVTSVV) are cytoplasmic. Residues 88–107 (PESALLIVLGLILGGIVWAA) form a helical membrane-spanning segment. The Extracellular portion of the chain corresponds to 108–116 (DHIASFTLT). The helical transmembrane segment at 117–134 (PTVFFFYLLPPIVLDAGY) threads the bilayer. The Cytoplasmic segment spans residues 135-137 (FMP). The chain crosses the membrane as a helical span at residues 138–173 (NRLFFGNLGTILLYAVIGTVWNAATTGLSLYGVYLS). Gly143, Gly146, and Thr147 together coordinate a 1,2-diacyl-sn-glycero-3-phospho-(1D-myo-inositol). Over 174-186 (GIMGDLSIGLLDF) the chain is Extracellular. A helical transmembrane segment spans residues 187–208 (LLFGSLIAAVDPVAVLAVFEEV). Over 209 to 210 (HV) the chain is Cytoplasmic. The helical transmembrane segment at 211–242 (NDVLFIIVFGESLLNDAVTVVLYNVFDSFVSL) threads the bilayer. At 243–249 (GADKVTG) the chain is on the extracellular side. A helical transmembrane segment spans residues 250 to 284 (VDCVKGIVSFFVVSLGGTLIGIIFAFLLSLVTRFT). The Cytoplasmic portion of the chain corresponds to 285-286 (KH). The chain crosses the membrane as a helical span at residues 287–309 (VRIIEPGFVFIISYLSYLTSEML). Residues 310–311 (SL) are Extracellular-facing. A helical membrane pass occupies residues 312-328 (SAILAITFCGICCQKYV). Over 329-335 (KANISEQ) the chain is Cytoplasmic. A helical membrane pass occupies residues 336–364 (SATTVRYTMKMLASGAETIIFMFLGISAV). The Extracellular segment spans residues 365–372 (DPAIWTWN). A helical membrane pass occupies residues 373 to 394 (TAFILLTLVFISVYRAIGVVLQ). Residues 395–407 (TWLLNKYRMVQLE) are Cytoplasmic-facing. Met403 contacts a 1,2-diacyl-sn-glycero-3-phospho-(1D-myo-inositol). Residues 408 to 431 (IIDQVVMSYGGLRGAVAYALVVLL) traverse the membrane as a helical segment. Residues 432 to 438 (DEKKVKE) lie on the Extracellular side of the membrane. A helical membrane pass occupies residues 439–472 (KNLFVSTTIIVVFFTVIFQGLTIKPLVQWLKVKK). Over 473 to 839 (SEHREPKLNE…RSFLPESTHM (367 aa)) the chain is Cytoplasmic. Residues Gln502, Ile503, and His505 each coordinate a 1,2-diacyl-sn-glycero-3-phospho-(1D-myo-inositol). 2 positions are modified to phosphoserine: Ser560 and Ser568. The tract at residues 581 to 595 (RPSTVEASVSYLLRE) is interaction with EZR. Residues 596 to 673 (NVSTVCLDMQ…RKRLESFKST (78 aa)) are interaction with NHERF4. The interval 597–701 (VSTVCLDMQA…GQKRRNSSIP (105 aa)) is interaction with AHCYL1. 2 positions are modified to phosphoserine: Ser598 and Ser613. Ser669 carries the post-translational modification Phosphoserine; by SGK1. Over residues 688–697 (KRERGQKRRN) the composition is skewed to basic residues. The disordered stretch occupies residues 688-710 (KRERGQKRRNSSIPNGKIPMESP). Phosphoserine occurs at positions 724, 815, and 818.

This sequence belongs to the monovalent cation:proton antiporter 1 (CPA1) transporter (TC 2.A.36) family. Homodimer. Found in the forms of complex and dynamic macromolecular complexes. Binds NHERF1 and NHERF2. Interacts with CHP1, CHP2 and SHANK2. Interacts with NHERF4 and interactions decrease in response to elevated calcium ion levels. Interacts with PDZK1 (via C-terminal PDZ domain). Interacts with AHCYL1; the interaction is required for SLC9A3 activity. Interacts with EZR; interaction targets SLC9A3 to the apical membrane. Interacts with SNX27 (via PDZ domains); directs SLC9A3 membrane insertion from early endosomes to the plasma membrane. Post-translationally, phosphorylated by PKA, which inhibits activity. Phosphorylation at Ser-669 by SGK1 is associated with increased abundance at the cell membrane.

It localises to the apical cell membrane. It is found in the cell membrane. The protein localises to the recycling endosome membrane. Its subcellular location is the early endosome membrane. The catalysed reaction is Na(+)(in) + H(+)(out) = Na(+)(out) + H(+)(in). With respect to regulation, seems to switch between active and inactive modes in response to various stimuli. Activated directly or indirectly by membrane phosphatidylinositol (PIs). Regulated by a variety of auxiliary proteins, which facilitate the maturation, cell surface expression and function of the transporter. Inhibited specifically by the drug tenapanor. Plasma membrane Na(+)/H(+) antiporter. Exchanges intracellular H(+) ions for extracellular Na(+) in 1:1 stoichiometry, playing a key role in salt and fluid absorption and pH homeostasis. Major apical Na(+)/H(+) exchanger in kidney and intestine playing an important role in renal and intestine Na(+) absorption and blood pressure regulation. This chain is Sodium/hydrogen exchanger 3 (SLC9A3), found in Didelphis virginiana (North American opossum).